The primary structure comprises 204 residues: uncharacterized protein (204 aa).

This is an uncharacterized protein from Rickettsia prowazekii (strain Madrid E).